The chain runs to 112 residues: Tyrosine-protein phosphatase 7 (112 aa).

The region spanning 1 to 112 (NNVTIIVMIT…SSPESGPIVV (112 aa)) is the Tyrosine-protein phosphatase domain. Position 82 (Asp-82) interacts with substrate.

Belongs to the protein-tyrosine phosphatase family.

It carries out the reaction O-phospho-L-tyrosyl-[protein] + H2O = L-tyrosyl-[protein] + phosphate. The sequence is that of Tyrosine-protein phosphatase 7 (STY-7) from Styela plicata (Wrinkled sea squirt).